Reading from the N-terminus, the 708-residue chain is Potassium-transporting ATPase ATP-binding subunit 2 (708 aa).

Residues 1–23 (MRSPSRLPHETRDSRQRTPKTDM) are disordered. The segment covering 7-23 (LPHETRDSRQRTPKTDM) has biased composition (basic and acidic residues). 4 consecutive transmembrane segments (helical) span residues 49 to 69 (MFIV…PNLF), 84 to 104 (GLIT…EAVA), 235 to 255 (IALT…VATM), and 283 to 303 (SIAI…GGLL). The 4-aspartylphosphate intermediate role is filled by D339. ATP-binding positions include D376, E380, 407 to 414 (FSAKTRMS), and K426. Mg(2+)-binding residues include D549 and D553. 3 consecutive transmembrane segments (helical) span residues 619–639 (FAIL…IMGL), 645–665 (AIIS…PLAL), and 683–703 (IFIY…LIDV).

This sequence belongs to the cation transport ATPase (P-type) (TC 3.A.3) family. Type IA subfamily. As to quaternary structure, the system is composed of three essential subunits: KdpA, KdpB and KdpC.

It is found in the cell inner membrane. It catalyses the reaction K(+)(out) + ATP + H2O = K(+)(in) + ADP + phosphate + H(+). Part of the high-affinity ATP-driven potassium transport (or Kdp) system, which catalyzes the hydrolysis of ATP coupled with the electrogenic transport of potassium into the cytoplasm. This subunit is responsible for energy coupling to the transport system and for the release of the potassium ions to the cytoplasm. This chain is Potassium-transporting ATPase ATP-binding subunit 2, found in Nostoc sp. (strain PCC 7120 / SAG 25.82 / UTEX 2576).